The primary structure comprises 549 residues: CDK5RAP3 protein homolog (549 aa).

3 short sequence motifs (shuffled ATG8-binding motif) span residues 274–277, 285–288, and 333–336; these read IDWD and ISWD.

Belongs to the CDK5RAP3 family. Substrate adapter component of the UFM1 ribosome E3 ligase (UREL) complex. Interacts with ATG8 family proteins.

Substrate adapter of E3 ligase complexes mediating ufmylation, the covalent attachment of the ubiquitin-like modifier UFM1 to substrate proteins, and which is involved in various processes, such as ribosome recycling and reticulophagy (also called ER-phagy). The chain is CDK5RAP3 protein homolog from Arabidopsis thaliana (Mouse-ear cress).